The sequence spans 417 residues: Serine hydroxymethyltransferase 2 (417 aa).

(6S)-5,6,7,8-tetrahydrofolate is bound by residues L121 and 125-127 (GHL). N6-(pyridoxal phosphate)lysine is present on K230. Position 355 to 357 (355 to 357 (SPF)) interacts with (6S)-5,6,7,8-tetrahydrofolate.

Belongs to the SHMT family. Homodimer. Pyridoxal 5'-phosphate serves as cofactor.

The protein resides in the cytoplasm. It carries out the reaction (6R)-5,10-methylene-5,6,7,8-tetrahydrofolate + glycine + H2O = (6S)-5,6,7,8-tetrahydrofolate + L-serine. It participates in one-carbon metabolism; tetrahydrofolate interconversion. It functions in the pathway amino-acid biosynthesis; glycine biosynthesis; glycine from L-serine: step 1/1. Catalyzes the reversible interconversion of serine and glycine with tetrahydrofolate (THF) serving as the one-carbon carrier. This reaction serves as the major source of one-carbon groups required for the biosynthesis of purines, thymidylate, methionine, and other important biomolecules. Also exhibits THF-independent aldolase activity toward beta-hydroxyamino acids, producing glycine and aldehydes, via a retro-aldol mechanism. In Pseudomonas savastanoi pv. phaseolicola (strain 1448A / Race 6) (Pseudomonas syringae pv. phaseolicola (strain 1448A / Race 6)), this protein is Serine hydroxymethyltransferase 2.